The following is a 360-amino-acid chain: NAD(P)H-quinone oxidoreductase subunit 1, chloroplastic (360 aa).

A run of 8 helical transmembrane segments spans residues 30 to 50 (FLPIFSLVVGIVTGVLVLVWL), 98 to 118 (FSIGPSLAVISILLSYSVIPF), 127 to 147 (FNIGIFLWIAISSIAPIGLLM), 165 to 185 (AAQSISYEIPLTLCLLSISLL), 203 to 223 (FWGWNLWRQPIGFIIFLISSL), 253 to 273 (FGLFYVASYLNLLISSLFVTV), 297 to 317 (IFGTTIGIFITLAKTYLFLFI), and 340 to 360 (FLLPISLGNLLLTTSFQVFSL).

Belongs to the complex I subunit 1 family. As to quaternary structure, NDH is composed of at least 16 different subunits, 5 of which are encoded in the nucleus.

The protein localises to the plastid. The protein resides in the chloroplast thylakoid membrane. The catalysed reaction is a plastoquinone + NADH + (n+1) H(+)(in) = a plastoquinol + NAD(+) + n H(+)(out). It carries out the reaction a plastoquinone + NADPH + (n+1) H(+)(in) = a plastoquinol + NADP(+) + n H(+)(out). Its function is as follows. NDH shuttles electrons from NAD(P)H:plastoquinone, via FMN and iron-sulfur (Fe-S) centers, to quinones in the photosynthetic chain and possibly in a chloroplast respiratory chain. The immediate electron acceptor for the enzyme in this species is believed to be plastoquinone. Couples the redox reaction to proton translocation, and thus conserves the redox energy in a proton gradient. The chain is NAD(P)H-quinone oxidoreductase subunit 1, chloroplastic from Aethionema cordifolium (Lebanon stonecress).